Reading from the N-terminus, the 88-residue chain is MANSKSAKKRALQSEKRRQHNASRRSMLRSYVKKVIAAINTGDHKAATEAFNAAQPIVDRMATKGLIHKNKAARHKARLNAKIKALAA.

Residues 1 to 27 (MANSKSAKKRALQSEKRRQHNASRRSM) form a disordered region.

Belongs to the bacterial ribosomal protein bS20 family.

Functionally, binds directly to 16S ribosomal RNA. The chain is Small ribosomal subunit protein bS20 from Shewanella loihica (strain ATCC BAA-1088 / PV-4).